The following is a 167-amino-acid chain: MKIMMILEMLFLIGMVILVVDISPYFGALGLIVVSLVGCLIILAKGNSFLSLSLLLIYLGGMMVVFSYCTALVLDLYPTVIVKEVLMKMALGVLVVVFLGYGGYLKADNGVLSMLGEGGVDNSFLGAGVLYGESWLLIVFGCLGLFLALLVILEITKSAERGAYRVI.

4 helical membrane-spanning segments follow: residues 24–44 (PYFGALGLIVVSLVGCLIILA), 54–74 (LLLIYLGGMMVVFSYCTALVL), 85–105 (VLMKMALGVLVVVFLGYGGYL), and 135–155 (WLLIVFGCLGLFLALLVILEI).

It belongs to the complex I subunit 6 family.

The protein resides in the mitochondrion membrane. The catalysed reaction is a ubiquinone + NADH + 5 H(+)(in) = a ubiquinol + NAD(+) + 4 H(+)(out). Functionally, core subunit of the mitochondrial membrane respiratory chain NADH dehydrogenase (Complex I) that is believed to belong to the minimal assembly required for catalysis. Complex I functions in the transfer of electrons from NADH to the respiratory chain. The immediate electron acceptor for the enzyme is believed to be ubiquinone. The polypeptide is NADH-ubiquinone oxidoreductase chain 6 (MT-ND6) (Myxine glutinosa (Atlantic hagfish)).